Consider the following 315-residue polypeptide: Pantothenate kinase (315 aa).

An ATP-binding site is contributed by Gly-94 to Ser-101.

Belongs to the prokaryotic pantothenate kinase family.

Its subcellular location is the cytoplasm. It carries out the reaction (R)-pantothenate + ATP = (R)-4'-phosphopantothenate + ADP + H(+). The protein operates within cofactor biosynthesis; coenzyme A biosynthesis; CoA from (R)-pantothenate: step 1/5. The polypeptide is Pantothenate kinase (Citrobacter koseri (strain ATCC BAA-895 / CDC 4225-83 / SGSC4696)).